Consider the following 127-residue polypeptide: Arginine decarboxylase proenzyme (127 aa).

Catalysis depends on serine 72, which acts as the Schiff-base intermediate with substrate; via pyruvic acid. Position 72 is a pyruvic acid (Ser); by autocatalysis (serine 72). The active-site Proton acceptor; for processing activity is histidine 77. The active-site Proton donor; for catalytic activity is the cysteine 92.

It belongs to the prokaryotic AdoMetDC family. Type 1 subfamily. Heterooctamer of four alpha and four beta chains arranged as a tetramer of alpha/beta heterodimers. It depends on pyruvate as a cofactor. Is synthesized initially as an inactive proenzyme. Formation of the active enzyme involves a self-maturation process in which the active site pyruvoyl group is generated from an internal serine residue via an autocatalytic post-translational modification. Two non-identical subunits are generated from the proenzyme in this reaction, and the pyruvate is formed at the N-terminus of the alpha chain, which is derived from the carboxyl end of the proenzyme. The post-translation cleavage follows an unusual pathway, termed non-hydrolytic serinolysis, in which the side chain hydroxyl group of the serine supplies its oxygen atom to form the C-terminus of the beta chain, while the remainder of the serine residue undergoes an oxidative deamination to produce ammonia and the pyruvoyl group blocking the N-terminus of the alpha chain.

The catalysed reaction is L-arginine + H(+) = agmatine + CO2. It participates in amine and polyamine biosynthesis; agmatine biosynthesis; agmatine from L-arginine: step 1/1. In terms of biological role, specifically catalyzes the decarboxylation of L-arginine to agmatine. Has no S-adenosylmethionine decarboxylase (AdoMetDC) activity. This chain is Arginine decarboxylase proenzyme, found in Staphylothermus marinus (strain ATCC 43588 / DSM 3639 / JCM 9404 / F1).